The sequence spans 600 residues: Sodium- and chloride-dependent betaine transporter (600 aa).

The disordered stretch occupies residues 1–31 (MGTSEHVPLPTDEAKAKELEQSQHSEEPDRG). The Cytoplasmic segment spans residues 1–38 (MGTSEHVPLPTDEAKAKELEQSQHSEEPDRGQWTGKFD). The segment covering 12–30 (DEAKAKELEQSQHSEEPDR) has biased composition (basic and acidic residues). 3 helical membrane passes run 39–59 (FLMS…FPYL), 68–88 (FLVV…LMEV), and 116–136 (VVIA…AMFY). The Extracellular portion of the chain corresponds to 137–207 (MISSIAWVFP…DTGDISEFGG (71 aa)). Asn165 carries an N-linked (GlcNAc...) asparagine glycan. 2 helical membrane-spanning segments follow: residues 208–228 (IQWE…FALW) and 237–257 (FVYF…IRGL). An N-linked (GlcNAc...) asparagine glycan is attached at Asn273. 7 helical membrane-spanning segments follow: residues 286–306 (AGTQ…ALGS), 321–341 (MCFI…SILG), 378–398 (VFAV…QVCM), 420–440 (SLGI…THSG), 454–474 (GYAL…GFGA), 499–519 (FCAP…YHPV), and 536–556 (WFLS…YLFF). The Cytoplasmic portion of the chain corresponds to 557–600 (TNKHLTLKERVRKGLNLDGSFESPAKKNLVNNAEELKFIESSSQ).

The protein belongs to the sodium:neurotransmitter symporter (SNF) family. As to expression, highly expressed in the head, the excretory canal, tail hypodermal cells, epidermis and vulval epithelial cells. Expressed in the excretory canal-associated neuron and in some non-amphidial sensory neurons in the head (at protein level).

It is found in the cell membrane. Functionally, betaine transporter dependent on Na(+) and Cl(-) ions that functions primarily in the epidermis to clear betaine from the extracellular space. Elicits current in response to betaine but not in response to GABA, L-carnitine, sarcosine, glycine or dimethylglycine. This chain is Sodium- and chloride-dependent betaine transporter, found in Caenorhabditis elegans.